A 233-amino-acid chain; its full sequence is Movement and silencing protein TGBp1 (233 aa).

One can recognise a (+)RNA virus helicase ATP-binding domain in the interval 1 to 133; it reads MNHFINLLVA…CKLLSSLGIK (133 aa). The (+)RNA virus helicase C-terminal domain maps to 134–233; the sequence is VESHRRDRDV…EFPHTTSRPQ (100 aa).

The protein belongs to the Tymovirales TGBp1 protein family. As to quaternary structure, homodimer and homooligomer. Interacts with capsid protein. Interacts with host AGO1; this interaction targets the host protein for degradation, thereby suppressing the antiviral RNA silencing.

It localises to the host cytoplasm. Its function is as follows. Transports viral genome to neighboring plant cells directly through plasmosdesmata, without any budding. The movement protein allows efficient cell to cell propagation, by bypassing the host cell wall barrier. Increases plasmodesma size exclusion limit. Acts as a suppressor of RNA-mediated gene silencing, also known as post-transcriptional gene silencing (PTGS), a mechanism of plant viral defense that limits the accumulation of viral RNAs. This chain is Movement and silencing protein TGBp1, found in Carica papaya (Papaya).